The sequence spans 131 residues: Translation initiation factor 5A (131 aa).

K36 carries the post-translational modification Hypusine.

Belongs to the eIF-5A family. In terms of processing, the N-terminus is blocked.

It is found in the cytoplasm. Its function is as follows. Functions by promoting the formation of the first peptide bond. This chain is Translation initiation factor 5A (eif5a), found in Sulfolobus acidocaldarius (strain ATCC 33909 / DSM 639 / JCM 8929 / NBRC 15157 / NCIMB 11770).